The chain runs to 253 residues: MTKPHDFKTKAIIVRKTKCGEADRILSLLTPDLGLIQGFAKSVRKTKSKLSGHLELLCYSEVSLARGKAIDTITGSQTIQSFLNIRNSLQLSAMAFYACELAYHFSPEEAANPAMFQLLLSTLEELDNGSQPELCLKYFEINLLASSGYKPELRECANCHKKLQATINYYSPESGGVICPNCRNTQIGMPVSVNTVKVLRYIQENSFSSICRLKINREILSELELAIRANIRFVLEKEPKALLWLDSLRLADL.

This sequence belongs to the RecO family.

In terms of biological role, involved in DNA repair and RecF pathway recombination. In Dehalococcoides mccartyi (strain CBDB1), this protein is DNA repair protein RecO.